A 31-amino-acid polypeptide reads, in one-letter code: MFTAISYLGILVGALLFVTITFLTLRTIQLL.

The chain crosses the membrane as a helical span at residues 5–25; it reads ISYLGILVGALLFVTITFLTL.

This sequence belongs to the PetL family. The 4 large subunits of the cytochrome b6-f complex are cytochrome b6, subunit IV (17 kDa polypeptide, PetD), cytochrome f and the Rieske protein, while the 4 small subunits are PetG, PetL, PetM and PetN. The complex functions as a dimer.

Its subcellular location is the plastid. It localises to the chloroplast thylakoid membrane. Functionally, component of the cytochrome b6-f complex, which mediates electron transfer between photosystem II (PSII) and photosystem I (PSI), cyclic electron flow around PSI, and state transitions. PetL is important for photoautotrophic growth as well as for electron transfer efficiency and stability of the cytochrome b6-f complex. This Chlorokybus atmophyticus (Soil alga) protein is Cytochrome b6-f complex subunit 6.